We begin with the raw amino-acid sequence, 462 residues long: Integrator complex subunit 12 (462 aa).

The interval 39–132 (LARGIDSSYR…PETRSSPITV (94 aa)) is disordered. Over residues 59–86 (ISSTKTVSVKQEPKTSSSLPSGNNNGKV) the composition is skewed to polar residues. Lysine 68 is covalently cross-linked (Glycyl lysine isopeptide (Lys-Gly) (interchain with G-Cter in SUMO2)). Basic and acidic residues predominate over residues 88–125 (TTEKVKKEGEKRPADKMKSDITEGADVPKKPRLEKPET). A Phosphoserine modification is found at serine 128. A PHD-type zinc finger spans residues 159–215 (GLACVVCRQMTVASGNQLVECQECHNLYHQDCHKPQVTDKEVTDPRLVWYCARCTRQ). Lysine 254 participates in a covalent cross-link: Glycyl lysine isopeptide (Lys-Gly) (interchain with G-Cter in SUMO2). The segment covering 305 to 328 (PSTAKLSSAAQNNSGKPATSSANQ) has biased composition (polar residues). A disordered region spans residues 305 to 462 (PSTAKLSSAA…KKAAQKKLKK (158 aa)). Composition is skewed to low complexity over residues 347–358 (KIGSSNSTSPTV) and 382–431 (VSKV…PSAS). Residues 434 to 443 (GPTSQESQLN) are compositionally biased toward polar residues. The span at 449–462 (QMVKKKAAQKKLKK) shows a compositional bias: basic residues.

It belongs to the Integrator subunit 12 family. Component of the Integrator complex, composed of core subunits INTS1, INTS2, INTS3, INTS4, INTS5, INTS6, INTS7, INTS8, INTS9/RC74, INTS10, INTS11/CPSF3L, INTS12, INTS13, INTS14 and INTS15. The core complex associates with protein phosphatase 2A subunits PPP2CA and PPP2R1A, to form the Integrator-PP2A (INTAC) complex. In terms of processing, dephosphorylated at Ser-128 by the PNUTS-PP1 complex, promoting RNA polymerase II transcription pause-release.

The protein resides in the nucleus. Component of the integrator complex, a multiprotein complex that terminates RNA polymerase II (Pol II) transcription in the promoter-proximal region of genes. The integrator complex provides a quality checkpoint during transcription elongation by driving premature transcription termination of transcripts that are unfavorably configured for transcriptional elongation: the complex terminates transcription by (1) catalyzing dephosphorylation of the C-terminal domain (CTD) of Pol II subunit POLR2A/RPB1 and SUPT5H/SPT5, (2) degrading the exiting nascent RNA transcript via endonuclease activity and (3) promoting the release of Pol II from bound DNA. The integrator complex is also involved in terminating the synthesis of non-coding Pol II transcripts, such as enhancer RNAs (eRNAs), small nuclear RNAs (snRNAs), telomerase RNAs and long non-coding RNAs (lncRNAs). Mediates recruitment of cytoplasmic dynein to the nuclear envelope, probably as component of the integrator complex. In Bos taurus (Bovine), this protein is Integrator complex subunit 12 (INTS12).